The chain runs to 258 residues: Tryptophan synthase alpha chain (258 aa).

Catalysis depends on proton acceptor residues glutamate 52 and aspartate 63.

The protein belongs to the TrpA family. Tetramer of two alpha and two beta chains.

The catalysed reaction is (1S,2R)-1-C-(indol-3-yl)glycerol 3-phosphate + L-serine = D-glyceraldehyde 3-phosphate + L-tryptophan + H2O. It participates in amino-acid biosynthesis; L-tryptophan biosynthesis; L-tryptophan from chorismate: step 5/5. Functionally, the alpha subunit is responsible for the aldol cleavage of indoleglycerol phosphate to indole and glyceraldehyde 3-phosphate. The sequence is that of Tryptophan synthase alpha chain from Streptococcus pneumoniae serotype 2 (strain D39 / NCTC 7466).